Here is a 260-residue protein sequence, read N- to C-terminus: NAD-capped RNA hydrolase NudC (260 aa).

Arginine 69 is a binding site for substrate. Zn(2+) is bound by residues cysteine 98 and cysteine 101. Glutamate 111 serves as a coordination point for substrate. Zn(2+) is bound by residues cysteine 116 and cysteine 119. A substrate-binding site is contributed by tyrosine 124. Positions proline 125 to threonine 248 constitute a Nudix hydrolase domain. A divalent metal cation-binding residues include alanine 158, glutamate 174, and glutamate 178. The short motif at glycine 159–glutamine 180 is the Nudix box element. Glutamine 192–serine 199 provides a ligand contact to substrate. A divalent metal cation is bound at residue glutamate 219. Alanine 241 lines the substrate pocket.

This sequence belongs to the Nudix hydrolase family. NudC subfamily. Homodimer. The cofactor is Mg(2+). Mn(2+) is required as a cofactor. Requires Zn(2+) as cofactor.

The enzyme catalyses a 5'-end NAD(+)-phospho-ribonucleoside in mRNA + H2O = a 5'-end phospho-adenosine-phospho-ribonucleoside in mRNA + beta-nicotinamide D-ribonucleotide + 2 H(+). The catalysed reaction is NAD(+) + H2O = beta-nicotinamide D-ribonucleotide + AMP + 2 H(+). It catalyses the reaction NADH + H2O = reduced beta-nicotinamide D-ribonucleotide + AMP + 2 H(+). In terms of biological role, mRNA decapping enzyme that specifically removes the nicotinamide adenine dinucleotide (NAD) cap from a subset of mRNAs by hydrolyzing the diphosphate linkage to produce nicotinamide mononucleotide (NMN) and 5' monophosphate mRNA. The NAD-cap is present at the 5'-end of some mRNAs and stabilizes RNA against 5'-processing. Has preference for mRNAs with a 5'-end purine. Catalyzes the hydrolysis of a broad range of dinucleotide pyrophosphates. This is NAD-capped RNA hydrolase NudC from Pectobacterium carotovorum subsp. carotovorum (strain PC1).